The chain runs to 85 residues: Photosystem I reaction center subunit PsaK (85 aa).

A run of 2 helical transmembrane segments spans residues 13-33 and 59-79; these read VSWT…AIAI and GAML…ILGL.

Belongs to the PsaG/PsaK family.

The protein localises to the cellular thylakoid membrane. The polypeptide is Photosystem I reaction center subunit PsaK (Synechococcus sp. (strain WH7803)).